The chain runs to 89 residues: Ubiquinol-cytochrome-c reductase complex assembly factor 3 (89 aa).

Residues 1 to 7 (MEAARKA) are Mitochondrial matrix-facing. The helical transmembrane segment at 8–28 (LAVVAVLGAGGGVGSILFALV) threads the bilayer. A mediates lipid-binding region spans residues 23–80 (ILFALVTPGELQKQLMLQEMPERDSRRRDEAVRTKELVMATLKDAAATKENVAWRRNW). The Mitochondrial intermembrane portion of the chain corresponds to 29-89 (TPGELQKQLM…WTVRGDGRSA (61 aa)).

The protein belongs to the UQCC3 family. In terms of assembly, associates with the ubiquinol-cytochrome c reductase complex (mitochondrial respiratory chain complex III(CIII) or cytochrome b-c1 complex). Interacts with UQCC1. Forms a complex, named COMC, composed of UQCC1, UQCC2; UQCC3 and UQCC4; mediates MT-CYB hemylation and association with the first nuclear-encoded complex III subunit UQCRQ. Probably cleaved by OMA1 under mitochondrial stress conditions.

It is found in the mitochondrion inner membrane. Functionally, required for the assembly of the ubiquinol-cytochrome c reductase complex (mitochondrial respiratory chain complex III or cytochrome b-c1 complex), mediating cytochrome b recruitment and probably stabilization within the complex. Thereby, plays an important role in ATP production by mitochondria. Cardiolipin-binding protein, it may also control the cardiolipin composition of mitochondria membranes and their morphology. The chain is Ubiquinol-cytochrome-c reductase complex assembly factor 3 from Rattus norvegicus (Rat).